Reading from the N-terminus, the 644-residue chain is MFQDNPLLAQLKQQLHSQTPRAEGVVKATEKGFGFLEVDAQKSYFIPPPQMKKVMHGDRIVAVIHTEKERESAEPEELIEPFLTRFVGKVQGKNDRLSIVPDHPLLKDAIPCRAARGVQHEFKEGDWAVAEMRRHPLKGDRSFYADLTQYITFADDHFVPWWVTLARHNLEKEAPNGVATEMLDEGLERQDLTALNFVTIDSASTEDMDDALYAEELADGRLQLTVAIADPTAWIAEGSKLDNTAKIRAFTNYLPGFNIPMLPRELSDDLCSLRANEVRPALACRMIIAADGTIDDDIAFFAATIESKAKLAYDNVSDWLENNGTWQPDNEGIAQQIRLLHRICLSRSEWRHHHALVFKDRPDYRFVLGEKGEVLDIVAEPRRIANRIVEESMIAANLCAARVLRDKLGFGIYNVHTGFDPANADALAALLKTHGLHVDAEEVLTLEGFCKLRRELDAQPSGFLDSRIRRFQSFAEISTEPGPHFGLGLEAYATWTSPIRKYGDMINHRLLKAVIKGEAIARPQEDITQQMAERRRLNRMAERDVGDWLYARFLNDKAGTNTRFAAEIIDVSRGGMRVRLVDNGAIAFIPAPFLHAVRDELVCSQENGTVQIKGETVYKVTDVIDVTIAEVRMETRSIIARPAA.

The RNB domain maps to 189–516 (RQDLTALNFV…NHRLLKAVIK (328 aa)). The 83-residue stretch at 561-643 (NTRFAAEIID…ETRSIIARPA (83 aa)) folds into the S1 motif domain.

This sequence belongs to the RNR ribonuclease family. RNase II subfamily.

The protein localises to the cytoplasm. The enzyme catalyses Exonucleolytic cleavage in the 3'- to 5'-direction to yield nucleoside 5'-phosphates.. In terms of biological role, involved in mRNA degradation. Hydrolyzes single-stranded polyribonucleotides processively in the 3' to 5' direction. In Salmonella paratyphi B (strain ATCC BAA-1250 / SPB7), this protein is Exoribonuclease 2.